The sequence spans 284 residues: Tropomyosin (284 aa).

Residues 1–284 are a coiled coil; sequence MEAIKNKMQA…DQTFAELTGY (284 aa). The interval 22–43 is disordered; that stretch reads AEIAEQKSRDANLRAEKSEEEV.

The protein belongs to the tropomyosin family. In terms of assembly, homodimer.

Its function is as follows. Tropomyosin, in association with the troponin complex, plays a central role in the calcium dependent regulation of muscle contraction. The polypeptide is Tropomyosin (Lepidoglyphus destructor (Storage mite)).